Consider the following 241-residue polypeptide: Phycocyanobilin:ferredoxin oxidoreductase (241 aa).

Belongs to the HY2 family.

The enzyme catalyses (2R,3Z)-phycocyanobilin + 4 oxidized [2Fe-2S]-[ferredoxin] = biliverdin IXalpha + 4 reduced [2Fe-2S]-[ferredoxin] + 4 H(+). Functionally, catalyzes the four-electron reduction of biliverdin IX-alpha (2-electron reduction at both the A and D rings); the reaction proceeds via an isolatable 2-electron intermediate, 181,182-dihydrobiliverdin. In Prochlorococcus marinus (strain MIT 9215), this protein is Phycocyanobilin:ferredoxin oxidoreductase.